A 164-amino-acid polypeptide reads, in one-letter code: MADQARARRLAKRICTIVASAIEFEIKDPGLDGVTIVDVKVTADLHDATVFYTVMGRTLEDAPDYTAATAALNRAKGTLRSKVGAGTGVRFTPTLTFIRDTTSDSVARMEELLARARAADADVAQVRLRAKPAGEADPYRDKGSVAGLVGVDIADIDDDDLTDD.

This sequence belongs to the RbfA family. In terms of assembly, monomer. Binds 30S ribosomal subunits, but not 50S ribosomal subunits or 70S ribosomes.

The protein resides in the cytoplasm. One of several proteins that assist in the late maturation steps of the functional core of the 30S ribosomal subunit. Associates with free 30S ribosomal subunits (but not with 30S subunits that are part of 70S ribosomes or polysomes). Required for efficient processing of 16S rRNA. May interact with the 5'-terminal helix region of 16S rRNA. The protein is Ribosome-binding factor A of Mycobacterium leprae (strain Br4923).